A 1390-amino-acid polypeptide reads, in one-letter code: Hepatocyte growth factor receptor (1390 aa).

The signal sequence occupies residues 1-24 (MKAPAVLAPGILVLLFTLVQRSNG). Residues 25–932 (ECKEALAKSE…VIVQPDQNFT (908 aa)) lie on the Extracellular side of the membrane. In terms of domain architecture, Sema spans 27–515 (KEALAKSEMN…TGKKITKIPL (489 aa)). The N-linked (GlcNAc...) asparagine glycan is linked to Asn-45. 4 disulfide bridges follow: Cys-95-Cys-101, Cys-98-Cys-160, Cys-133-Cys-141, and Cys-172-Cys-175. Asn-106 carries N-linked (GlcNAc...) asparagine glycosylation. N-linked (GlcNAc...) asparagine glycosylation occurs at Asn-149. Asn-202 is a glycosylation site (N-linked (GlcNAc...) asparagine). 2 disulfide bridges follow: Cys-298/Cys-363 and Cys-385/Cys-397. 2 N-linked (GlcNAc...) asparagine glycosylation sites follow: Asn-399 and Asn-405. 4 cysteine pairs are disulfide-bonded: Cys-520–Cys-538, Cys-526–Cys-561, Cys-529–Cys-545, and Cys-541–Cys-551. IPT/TIG domains lie at 563–655 (PAIY…FSYV), 657–739 (PVIT…FSYR), and 742–836 (PIVY…LIYV). The O-linked (Man) threonine glycan is linked to Thr-582. Residues Asn-607 and Asn-635 are each glycosylated (N-linked (GlcNAc...) asparagine). O-linked (Man) threonine glycans are attached at residues Thr-676 and Thr-761. 3 N-linked (GlcNAc...) asparagine glycosylation sites follow: Asn-785, Asn-879, and Asn-930. A helical membrane pass occupies residues 933–955 (GLIAGVVSISIALLLLLGFFLWL). Residues 956 to 1390 (KKRKQIKDLG…TRPASFWETS (435 aa)) lie on the Cytoplasmic side of the membrane. Ser-966 is modified (phosphoserine). Position 977 is a phosphothreonine (Thr-977). Phosphoserine is present on residues Ser-990, Ser-997, and Ser-1000. The residue at position 1003 (Tyr-1003) is a Phosphotyrosine. A Protein kinase domain is found at 1078 to 1345 (VHFNEVIGRG…RISAIFSTFI (268 aa)). ATP contacts are provided by residues 1084–1092 (IGRGHFGCV) and Lys-1110. The Proton acceptor role is filled by Asp-1204. The interaction with RANBP9 stretch occupies residues 1212–1390 (LDEKFTVKVA…TRPASFWETS (179 aa)). Tyr-1230 carries the phosphotyrosine modification. Phosphotyrosine; by autocatalysis is present on residues Tyr-1234 and Tyr-1235. Phosphothreonine is present on Thr-1289. The interval 1320 to 1359 (WHPKAEMRPSFSELVSRISAIFSTFIGEHYVHVNATYVNV) is interaction with MUC20. Residues Tyr-1349 and Tyr-1356 each carry the phosphotyrosine; by autocatalysis modification. The residue at position 1365 (Tyr-1365) is a Phosphotyrosine.

This sequence belongs to the protein kinase superfamily. Tyr protein kinase family. As to quaternary structure, heterodimer made of an alpha chain (50 kDa) and a beta chain (145 kDa) which are disulfide linked. Binds PLXNB1. Interacts when phosphorylated with downstream effectors including STAT3, PIK3R1, SRC, PCLG1, GRB2 and GAB1. Interacts with SPSB1, SPSB2 and SPSB4. Interacts with INPP5D/SHIP1. When phosphorylated at Tyr-1356, interacts with INPPL1/SHIP2. Interacts with RANBP9 and RANBP10, as well as SPSB1, SPSB2, SPSB3 and SPSB4. SPSB1 binding occurs in the presence and in the absence of HGF, however HGF treatment has a positive effect on this interaction. Interacts with MUC20; prevents interaction with GRB2 and suppresses hepatocyte growth factor-induced cell proliferation. Interacts with GRB10. Interacts with PTPN1 and PTPN2. Interacts with HSP90AA1 and HSP90AB1; the interaction suppresses MET kinase activity. Interacts with tensin TNS3. Interacts (when phosphorylated) with tensin TNS4 (via SH2 domain); the interaction increases MET protein stability by inhibiting MET endocytosis and subsequent lysosomal degradation. Autophosphorylated in response to ligand binding on Tyr-1234 and Tyr-1235 in the kinase domain leading to further phosphorylation of Tyr-1349 and Tyr-1356 in the C-terminal multifunctional docking site. Dephosphorylated by PTPRJ at Tyr-1349 and Tyr-1365. Dephosphorylated by PTPN1 and PTPN2. In terms of processing, ubiquitinated. Ubiquitination by CBL regulates the receptor stability and activity through proteasomal degradation. Post-translationally, O-mannosylation of IPT/TIG domains by TMEM260 is required for protein maturation. O-mannosylated residues are composed of single mannose glycans that are not elongated or modified.

It is found in the membrane. It catalyses the reaction L-tyrosyl-[protein] + ATP = O-phospho-L-tyrosyl-[protein] + ADP + H(+). Its activity is regulated as follows. In its inactive state, the C-terminal tail interacts with the catalytic domain and inhibits the kinase activity. Upon ligand binding, the C-terminal tail is displaced and becomes phosphorylated, thus increasing the kinase activity. Receptor tyrosine kinase that transduces signals from the extracellular matrix into the cytoplasm by binding to hepatocyte growth factor/HGF ligand. Regulates many physiological processes including proliferation, scattering, morphogenesis and survival. Ligand binding at the cell surface induces autophosphorylation of MET on its intracellular domain that provides docking sites for downstream signaling molecules. Following activation by ligand, interacts with the PI3-kinase subunit PIK3R1, PLCG1, SRC, GRB2, STAT3 or the adapter GAB1. Recruitment of these downstream effectors by MET leads to the activation of several signaling cascades including the RAS-ERK, PI3 kinase-AKT, or PLCgamma-PKC. The RAS-ERK activation is associated with the morphogenetic effects while PI3K/AKT coordinates prosurvival effects. During embryonic development, MET signaling plays a role in gastrulation, development and migration of muscles and neuronal precursors, angiogenesis and kidney formation. In adults, participates in wound healing as well as organ regeneration and tissue remodeling. Also promotes differentiation and proliferation of hematopoietic cells. The sequence is that of Hepatocyte growth factor receptor (MET) from Pan troglodytes (Chimpanzee).